We begin with the raw amino-acid sequence, 101 residues long: Apolipoprotein C-II (101 aa).

A signal peptide spans 1–22 (MGARHLLALLLVLLVLGFEVQG). The segment at 66–74 (TMDEKIRDM) is lipid binding. Residues 78 to 101 (STAAVSTYVGIFTDQLLSLLKGED) form a lipoprotein lipase cofactor region.

It belongs to the apolipoprotein C2 family. In terms of processing, proapolipoprotein C-II is synthesized as a sialic acid containing glycoprotein which is subsequently desialylated prior to its proteolytic processing. Proapolipoprotein C-II, the major form found in plasma undergoes proteolytic cleavage of its N-terminal hexapeptide to generate apolipoprotein C-II, which occurs as the minor form in plasma.

Its subcellular location is the secreted. Its function is as follows. Component of chylomicrons, very low-density lipoproteins (VLDL), low-density lipoproteins (LDL), and high-density lipoproteins (HDL) in plasma. Plays an important role in lipoprotein metabolism as an activator of lipoprotein lipase. Both proapolipoprotein C-II and apolipoprotein C-II can activate lipoprotein lipase. This chain is Apolipoprotein C-II (APOC2), found in Tapirus terrestris (Lowland tapir).